The primary structure comprises 793 residues: Putative potassium transporter 12 (793 aa).

The Cytoplasmic segment spans residues 1–54 (MASISDSETTNHGSIWDLDQNLDQPMDEEASRLKNMYTEKKFSSILLLRLAFQS). Residues 55–75 (LGVVFGDLGTSPLYVFYNIFP) traverse the membrane as a helical segment. The Extracellular portion of the chain corresponds to 76–87 (HGVDDDEDVIGA). Residues 88-108 (LSLIIYTLTLIPLMKYVFVVL) form a helical membrane-spanning segment. Residues 109–175 (RANDNGQGGT…EGHVYKKNCL (67 aa)) lie on the Cytoplasmic side of the membrane. A helical membrane pass occupies residues 176–196 (LILVLIGTCTAIGDGILTPAI). The Extracellular portion of the chain corresponds to 197 to 215 (SVLSASGGIRVQNQKMSTD). The chain crosses the membrane as a helical span at residues 216–236 (VVVVVAVIILIGLFSMQHYGT). Over 237–238 (DK) the chain is Cytoplasmic. Residues 239-259 (VGWLFAPIVLLWFILIGTIGA) form a helical membrane-spanning segment. Residues 260–289 (LNIHKYNSSVLKAYNPVYIYRYFRRGKSES) lie on the Extracellular side of the membrane. Asn-266 carries N-linked (GlcNAc...) asparagine glycosylation. A helical transmembrane segment spans residues 290-310 (WTSLGGIMLSITGTEALYADL). The Cytoplasmic portion of the chain corresponds to 311 to 315 (CHFPV). Residues 316–338 (LAIQIAFTLVVFPCLLLAYTGQA) traverse the membrane as a helical segment. Residues 339–359 (AYIISNKDHVVDAFYRSIPDT) are Extracellular-facing. The helical transmembrane segment at 360–380 (IYWPVFIIATLAAIVASQATI) threads the bilayer. Residues 381 to 411 (SATYSIIKQALALGCFPRVSVVHTSKKFLGQ) are Cytoplasmic-facing. The chain crosses the membrane as a helical span at residues 412 to 432 (IYIPDINWVLMILCIAVTAGF). The Extracellular segment spans residues 433–444 (KNQSQIGNAYGT). Asn-434 carries N-linked (GlcNAc...) asparagine glycosylation. The chain crosses the membrane as a helical span at residues 445–465 (AVVIVMLVTTFLMVPIMLLVW). Over 466–468 (KSH) the chain is Cytoplasmic. Residues 469 to 489 (WILVVIFIVLSLMVELPYFTA) traverse the membrane as a helical segment. Over 490–496 (CINKVDQ) the chain is Extracellular. A helical membrane pass occupies residues 497–517 (GGWVPLVVATTCFIIMYVWHF). Topologically, residues 518 to 793 (CTVKRYEFEM…LLNVGQIYYI (276 aa)) are cytoplasmic.

The protein belongs to the HAK/KUP transporter (TC 2.A.72.3) family.

The protein localises to the membrane. Functionally, high-affinity potassium transporter. The sequence is that of Putative potassium transporter 12 (HAK12) from Oryza sativa subsp. japonica (Rice).